The chain runs to 267 residues: UDP-glucose:undecaprenyl-phosphate glucose-1-phosphate transferase (267 aa).

A helical transmembrane segment spans residues 83–103 (VAAALLTALFAPLLLLAALAI).

Belongs to the bacterial sugar transferase family.

It is found in the cell membrane. The catalysed reaction is di-trans,octa-cis-undecaprenyl phosphate + UDP-alpha-D-glucose = alpha-D-glucosyl di-trans,octa-cis-undecaprenyl diphosphate + UMP. In terms of biological role, is likely the initiating enzyme for holdfast polysaccharide synthesis. Catalyzes the transfer of the glucose-1-phosphate moiety from UDP-Glc onto the carrier lipid undecaprenyl phosphate (C55-P), forming a phosphoanhydride bond yielding to glucosyl-pyrophosphoryl-undecaprenol (Glc-PP-C55). Also possesses a weak galactose-1-P transferase activity. In Caulobacter vibrioides (strain ATCC 19089 / CIP 103742 / CB 15) (Caulobacter crescentus), this protein is UDP-glucose:undecaprenyl-phosphate glucose-1-phosphate transferase (pssY).